The chain runs to 171 residues: Methylated-DNA--protein-cysteine methyltransferase (171 aa).

The active-site Nucleophile; methyl group acceptor is C139.

It belongs to the MGMT family.

Its subcellular location is the cytoplasm. It carries out the reaction a 6-O-methyl-2'-deoxyguanosine in DNA + L-cysteinyl-[protein] = S-methyl-L-cysteinyl-[protein] + a 2'-deoxyguanosine in DNA. The enzyme catalyses a 4-O-methyl-thymidine in DNA + L-cysteinyl-[protein] = a thymidine in DNA + S-methyl-L-cysteinyl-[protein]. Involved in the cellular defense against the biological effects of O6-methylguanine (O6-MeG) and O4-methylthymine (O4-MeT) in DNA. Repairs the methylated nucleobase in DNA by stoichiometrically transferring the methyl group to a cysteine residue in the enzyme. This is a suicide reaction: the enzyme is irreversibly inactivated. The polypeptide is Methylated-DNA--protein-cysteine methyltransferase (Salmonella typhi).